A 299-amino-acid chain; its full sequence is Regucalcin (299 aa).

Glu18 is a binding site for a divalent metal cation. Substrate-binding residues include Arg101, Asn103, and Glu121. At Lys144 the chain carries N6-succinyllysine. Residues Asn154 and Asp204 each coordinate a divalent metal cation. The active-site Proton donor/acceptor is Asp204. N6-succinyllysine occurs at positions 244 and 253.

The protein belongs to the SMP-30/CGR1 family. In terms of assembly, monomer. The cofactor is Zn(2+). Mn(2+) is required as a cofactor. It depends on Ca(2+) as a cofactor. Requires Mg(2+) as cofactor.

Its subcellular location is the cytoplasm. It carries out the reaction D-glucono-1,5-lactone + H2O = D-gluconate + H(+). Its function is as follows. Gluconolactonase with low activity towards other sugar lactones, including gulonolactone and galactonolactone. Can also hydrolyze diisopropyl phosphorofluoridate and phenylacetate (in vitro). Calcium-binding protein. Modulates Ca(2+) signaling, and Ca(2+)-dependent cellular processes and enzyme activities. In Macaca fascicularis (Crab-eating macaque), this protein is Regucalcin (RGN).